Consider the following 66-residue polypeptide: Cold shock protein CspC (66 aa).

Residues 4–63 enclose the CSD domain; that stretch reads GTVKWFNAEKGFGFIERENGDDVFVHFSAIQSDGFKSLDEGQKVSFDVEQGARGAQAANV.

The protein localises to the cytoplasm. The polypeptide is Cold shock protein CspC (cspC) (Bacillus subtilis (strain 168)).